We begin with the raw amino-acid sequence, 183 residues long: MSESSIKIENVVASTKLAEEFDLTVIESQFEGAEYNKQKFPGLVYRVSDPKAAFLVFTSGKVVCTGAKNVADVHTVIGNMAKKLNSIGIKTMENPQITVQNIVASADLHTILNLNAIAIGLGLENIEYEPEQFPGLVYRIDEPKVVVLIFSSGKLVVTGGKTPEDCESGVEVVRQQLDNMGLL.

2 consecutive repeat copies span residues 8–84 (IENV…AKKL) and 99–177 (VQNI…RQQL).

It belongs to the TBP family.

General factor that plays a role in the activation of archaeal genes transcribed by RNA polymerase. Binds specifically to the TATA box promoter element which lies close to the position of transcription initiation. This is TATA-box-binding protein 2 from Methanosarcina mazei (strain ATCC BAA-159 / DSM 3647 / Goe1 / Go1 / JCM 11833 / OCM 88) (Methanosarcina frisia).